We begin with the raw amino-acid sequence, 31 residues long: Circulin-B (31 aa).

Residues 1-31 (GVIPCGESCVFIPCISTLLGCSCKNKVCYRN) constitute a cross-link (cyclopeptide (Gly-Asn)). 3 disulfides stabilise this stretch: Cys5–Cys21, Cys9–Cys23, and Cys14–Cys28.

This is a cyclic peptide.

Functionally, probably participates in a plant defense mechanism. Has antibiotic activity. Inhibits the cytopathic effects and replication of the human immunodeficiency virus. Active against both Gram-positive and Gram-negative bacteria. This Chassalia parviflora protein is Circulin-B.